The sequence spans 108 residues: Glutaredoxin-like protein YDR286C homolog (108 aa).

Cys-22 and Cys-25 are disulfide-bonded.

Belongs to the glutaredoxin family. YDR286C subfamily.

This chain is Glutaredoxin-like protein YDR286C homolog, found in Dictyostelium discoideum (Social amoeba).